The sequence spans 21 residues: Dahlein-5.2 (21 aa).

Expressed by the skin dorsal glands.

It is found in the secreted. Functionally, has no antimicrobial activity. Strongly inhibits the formation of NO by neuronal nitric oxide synthase at micromolar concentrations. This is Dahlein-5.2 from Ranoidea dahlii (Dahl's aquatic frog).